The following is an 860-amino-acid chain: Protein argonaute-2 (860 aa).

The tract at residues Met-1–Pro-30 is disordered. Tyr-2 is modified (3'-nitrotyrosine). Residues Leu-9–Pro-30 show a composition bias toward pro residues. Residues Pro-230 to Ala-349 enclose the PAZ domain. Residues Tyr-312 to His-317 form an interaction with guide RNA region. At Ser-388 the chain carries Phosphoserine. Positions Leu-518–Val-819 constitute a Piwi domain. Positions Gly-525–Lys-567 are interaction with guide RNA. The tract at residues Phe-588–Pro-591 is interaction with GW182 family members. Position 598 (Asp-598) interacts with a divalent metal cation. The interval Leu-651–Lys-661 is interaction with GW182 family members. Position 670 (Asp-670) interacts with a divalent metal cation. Pro-701 carries the 4-hydroxyproline modification. 3 interaction with guide RNA regions span residues Lys-710–Arg-711, His-754–Arg-762, and Tyr-791–Arg-813. Position 808 (His-808) interacts with a divalent metal cation. 4 positions are modified to phosphoserine: Ser-825, Ser-829, Ser-832, and Ser-835.

This sequence belongs to the argonaute family. Ago subfamily. In terms of assembly, interacts with DICER1 through its Piwi domain and with TARBP2 during assembly of the RNA-induced silencing complex (RISC). Together, DICER1, AGO2 and TARBP2 constitute the trimeric RISC loading complex (RLC), or micro-RNA (miRNA) loading complex (miRLC). Within the RLC/miRLC, DICER1 and TARBP2 are required to process precursor miRNAs (pre-miRNAs) to mature miRNAs and then load them onto AGO2. AGO2 bound to the mature miRNA constitutes the minimal RISC and may subsequently dissociate from DICER1 and TARBP2. Note however that the term RISC has also been used to describe the trimeric RLC/miRLC. The formation of RISC complexes containing siRNAs rather than miRNAs appears to occur independently of DICER1. Interacts with AGO1. Also interacts with DDB1, DDX5, DDX6, DDX20, DHX30, DHX36, DDX47, DHX9, ELAVL, FXR1, GEMIN4, HNRNPF, IGF2BP1, ILF3, IMP8, MATR3, PABPC1, PRMT5, P4HA1, P4HB, RBM4, SART3, TNRC6A, TNRC6B, UPF1 and YBX1. Interacts with the P-body components DCP1A and XRN1. Associates with polysomes and messenger ribonucleoproteins (mNRPs). Interacts with RBM4; the interaction is modulated under stress-induced conditions, occurs under both cell proliferation and differentiation conditions and in an RNA- and phosphorylation-independent manner. Interacts with LIMD1, WTIP and AJUBA. Interacts with TRIM71; the interaction increases in presence of RNA. Interacts with APOBEC3G in an RNA-dependent manner. Interacts with APOBEC3A, APOBEC3C, APOBEC3F and APOBEC3H. Interacts with DICER1, TARBP2, EIF6, MOV10 and RPL7A (60S ribosome subunit); they form a large RNA-induced silencing complex (RISC). Interacts with FMR1. Interacts with ZFP36. Interacts with RC3H1; the interaction is RNA independent. Found in a complex composed of AGO2, CHD7 and ARB2A. Interacts with SND1 and SYT11. Interacts with CLNK. Interacts with GARRE1. Interacts with GRB2; this interaction is important for the formation of a ternary complex containing GRB2, AGO2 and DICER1. Mg(2+) is required as a cofactor. Mn(2+) serves as cofactor. In terms of processing, hydroxylated. 4-hydroxylation appears to enhance protein stability but is not required for miRNA-binding or endonuclease activity. Post-translationally, ubiquitinated on surface-exposed lysines by a SCF-like E3 ubiquitin-protein ligase complex containing ZSWIM8 during target-directed microRNA degradation (TDMD), a process that mediates degradation of microRNAs (miRNAs). Ubiquitination by the SCF-like E3 ubiquitin-protein ligase complex containing ZSWIM8 leads to its subsequent degradation, thereby exposing miRNAs for degradation. ZSWIM8 recognizes and binds AGO2 when it is engaged with a TDMD target. Phosphorylation at Ser-388 by AKT3; leads to up-regulate translational repression of microRNA target and down-regulate endonucleolytic cleavage. In terms of processing, a phosphorylation cycle of C-terminal serine cluster (Ser-825-Ser-835) regulates the release of target mRNAs. Target-binding leads to phosphorylation of these residues by CSNK1A1, which reduces the affinity of AGO2 for mRNA and enables target release. The ANKRD52-PPP6C phosphatase complex dephosphorylates the residues, which primes AGO2 for binding a new target.

The protein resides in the cytoplasm. Its subcellular location is the P-body. It localises to the nucleus. It catalyses the reaction Endonucleolytic cleavage to 5'-phosphomonoester.. In terms of biological role, required for RNA-mediated gene silencing (RNAi) by the RNA-induced silencing complex (RISC). The 'minimal RISC' appears to include AGO2 bound to a short guide RNA such as a microRNA (miRNA) or short interfering RNA (siRNA). These guide RNAs direct RISC to complementary mRNAs that are targets for RISC-mediated gene silencing. The precise mechanism of gene silencing depends on the degree of complementarity between the miRNA or siRNA and its target. Binding of RISC to a perfectly complementary mRNA generally results in silencing due to endonucleolytic cleavage of the mRNA specifically by AGO2. Binding of RISC to a partially complementary mRNA results in silencing through inhibition of translation, and this is independent of endonuclease activity. May inhibit translation initiation by binding to the 7-methylguanosine cap, thereby preventing the recruitment of the translation initiation factor eIF4-E. May also inhibit translation initiation via interaction with EIF6, which itself binds to the 60S ribosomal subunit and prevents its association with the 40S ribosomal subunit. The inhibition of translational initiation leads to the accumulation of the affected mRNA in cytoplasmic processing bodies (P-bodies), where mRNA degradation may subsequently occur. In some cases RISC-mediated translational repression is also observed for miRNAs that perfectly match the 3' untranslated region (3'-UTR). Can also up-regulate the translation of specific mRNAs under certain growth conditions. Binds to the AU element of the 3'-UTR of the TNF (TNF-alpha) mRNA and up-regulates translation under conditions of serum starvation. Also required for transcriptional gene silencing (TGS), in which short RNAs known as antigene RNAs or agRNAs direct the transcriptional repression of complementary promoter regions. This is Protein argonaute-2 (AGO2) from Bos taurus (Bovine).